The following is a 433-amino-acid chain: Probable non-inhibitory serpin-Z5 (433 aa).

A compositionally biased stretch (basic and acidic residues) spans 1 to 12 (MEPKEKKQKLDT). The tract at residues 1–43 (MEPKEKKQKLDTSEVASPSLSKTHLKKKKTKKQKIRKSQEITS) is disordered. Positions 23-36 (THLKKKKTKKQKIR) are enriched in basic residues. The segment at 380–404 (GTEAVTFTAFRSAYLGCALVKPIDF) is RCL.

The protein belongs to the serpin family. As to expression, weakly expressed during seedling development.

This chain is Probable non-inhibitory serpin-Z5, found in Arabidopsis thaliana (Mouse-ear cress).